The chain runs to 316 residues: L-lactate dehydrogenase 1 (316 aa).

NAD(+)-binding residues include valine 17, aspartate 38, lysine 43, and tyrosine 69. Residues arginine 92 and 124–127 (NPVD) contribute to the substrate site. Residues 122–124 (VSN) and threonine 147 contribute to the NAD(+) site. 152–155 (DTSR) serves as a coordination point for substrate. The active-site Proton acceptor is histidine 179. Threonine 234 serves as a coordination point for substrate.

The protein belongs to the LDH/MDH superfamily. LDH family. In terms of assembly, homotetramer.

It localises to the cytoplasm. The enzyme catalyses (S)-lactate + NAD(+) = pyruvate + NADH + H(+). The protein operates within fermentation; pyruvate fermentation to lactate; (S)-lactate from pyruvate: step 1/1. Its function is as follows. Catalyzes the conversion of lactate to pyruvate. This chain is L-lactate dehydrogenase 1, found in Bifidobacterium longum subsp. longum (strain ATCC 15707 / DSM 20219 / JCM 1217 / NCTC 11818 / E194b).